The chain runs to 495 residues: MSRITTDQLRHAVLDRGSFVSWDSEPLAVPVADSYARELAAARAATGADESVQTGEGRVFGRRVAVVACEFDFLGGSIGVAAAERITAAVERATAERLPLLASPSSGGTRMQEGTVAFLQMVKIAAAIQLHNQARLPYLVYLRHPTTGGVFASWGSLGHLTVAEPGALIGFLGPRVYELLYGDPFPSGVQTAENLRRHGIIDGVVALDRLRPMLDRALTVLIDAPEPLPAPQTPAPVPDVPTWDSVVASRRPDRPGVRQLLRHGATDRVLLSGTDQGEAATTLLALARFGGQPTVVLGQQRAVGGGGSTVGPAALREARRGMALAAELCLPLVLVIDAAGPALSAAAEQGGLAGQIAHCLAELVTLDTPTVSILLGQGSGGPALAMLPADRVLAALHGWLAPLPPEGASAIVFRDTAHAAELAAAQGIRSADLLKSGIVDTIVPEYPDAADEPIEFALRLSNAIAAEVHALRKIPAPERLATRLQRYRRIGLPRD.

A CoA carboxyltransferase N-terminal domain is found at 1–236 (MSRITTDQLR…PLPAPQTPAP (236 aa)). The region spanning 242 to 470 (TWDSVVASRR…SNAIAAEVHA (229 aa)) is the CoA carboxyltransferase C-terminal domain.

The protein belongs to the AccD/PCCB family. The biotin-dependent acyl-CoA carboxylase complex is composed of an AccA protein, which contains the biotin carboxylase (BC) and biotin carboxyl carrier protein (BCCP) domains, and an AccD protein, which contains the carboxyl transferase (CT) domain.

In terms of biological role, component of a biotin-dependent acyl-CoA carboxylase complex. This subunit transfers the CO2 from carboxybiotin to the CoA ester substrate. This chain is Probable biotin-dependent acyl-coenzyme A carboxylase beta3 subunit (accD3), found in Mycobacterium bovis (strain ATCC BAA-935 / AF2122/97).